The primary structure comprises 182 residues: Ribulose bisphosphate carboxylase small subunit, chloroplastic 5 (182 aa).

The transit peptide at 1-49 (MASSLMSNAATTMAAATTTAQANMVAPFNGLKSISAFPVTRKNNDITSV) directs the protein to the chloroplast.

Belongs to the RuBisCO small chain family. As to quaternary structure, heterohexadecamer of 8 large and 8 small subunits.

The protein resides in the plastid. It localises to the chloroplast. Functionally, ruBisCO catalyzes two reactions: the carboxylation of D-ribulose 1,5-bisphosphate, the primary event in carbon dioxide fixation, as well as the oxidative fragmentation of the pentose substrate. Both reactions occur simultaneously and in competition at the same active site. Although the small subunit is not catalytic it is essential for maximal activity. This Mesembryanthemum crystallinum (Common ice plant) protein is Ribulose bisphosphate carboxylase small subunit, chloroplastic 5.